The following is a 345-amino-acid chain: uncharacterized protein (345 aa).

The next 8 helical transmembrane spans lie at V9–V31, T84–L103, Y116–T138, V148–F170, V182–A204, W269–G286, I291–Y308, and H313–I335.

It localises to the cell membrane. This is an uncharacterized protein from Treponema pallidum (strain Nichols).